Reading from the N-terminus, the 216-residue chain is Pyrophosphatase PpaX (216 aa).

The Nucleophile role is filled by D9.

The protein belongs to the HAD-like hydrolase superfamily. PpaX family. Mg(2+) serves as cofactor.

The enzyme catalyses diphosphate + H2O = 2 phosphate + H(+). Functionally, hydrolyzes pyrophosphate formed during P-Ser-HPr dephosphorylation by HPrK/P. Might play a role in controlling the intracellular pyrophosphate pool. This is Pyrophosphatase PpaX from Bacillus cereus (strain G9842).